Here is a 289-residue protein sequence, read N- to C-terminus: Enoyl-CoA hydratase domain-containing protein 3, mitochondrial (289 aa).

The transit peptide at 1-14 (MLLRGFSELLKCRG) directs the protein to the mitochondrion.

This sequence belongs to the enoyl-CoA hydratase/isomerase family.

It is found in the mitochondrion. Its function is as follows. May play a role in fatty acid biosynthesis and insulin sensitivity. In Danio rerio (Zebrafish), this protein is Enoyl-CoA hydratase domain-containing protein 3, mitochondrial (echdc3).